A 294-amino-acid chain; its full sequence is Putative HTH-type transcriptional regulatory protein STK_12680 (294 aa).

In terms of domain architecture, HTH cro/C1-type spans 123-175 (LKKKREEMGLSLGEVAQALGVSRISIYDYEREDSYVSIDIAEKLVELFGDDIL). The H-T-H motif DNA-binding region spans 134 to 153 (LGEVAQALGVSRISIYDYER).

The polypeptide is Putative HTH-type transcriptional regulatory protein STK_12680 (Sulfurisphaera tokodaii (strain DSM 16993 / JCM 10545 / NBRC 100140 / 7) (Sulfolobus tokodaii)).